We begin with the raw amino-acid sequence, 488 residues long: Ribulose bisphosphate carboxylase large chain (488 aa).

Substrate-binding residues include Asn-127 and Thr-177. Lys-179 (proton acceptor) is an active-site residue. Lys-181 provides a ligand contact to substrate. Residues Lys-205, Asp-207, and Glu-208 each coordinate Mg(2+). Lys-205 carries the N6-carboxylysine modification. His-297 acts as the Proton acceptor in catalysis. Substrate is bound by residues Arg-298, His-330, and Ser-382.

This sequence belongs to the RuBisCO large chain family. Type I subfamily. In terms of assembly, heterohexadecamer of 8 large chains and 8 small chains. Mg(2+) is required as a cofactor.

Its subcellular location is the plastid. It localises to the chloroplast. The catalysed reaction is 2 (2R)-3-phosphoglycerate + 2 H(+) = D-ribulose 1,5-bisphosphate + CO2 + H2O. The enzyme catalyses D-ribulose 1,5-bisphosphate + O2 = 2-phosphoglycolate + (2R)-3-phosphoglycerate + 2 H(+). RuBisCO catalyzes two reactions: the carboxylation of D-ribulose 1,5-bisphosphate, the primary event in carbon dioxide fixation, as well as the oxidative fragmentation of the pentose substrate in the photorespiration process. Both reactions occur simultaneously and in competition at the same active site. This Pyropia suborbiculata (Red alga) protein is Ribulose bisphosphate carboxylase large chain.